Consider the following 124-residue polypeptide: Conotoxin Im14.2 (124 aa).

Residues methionine 1–glycine 20 form the signal peptide. Residues isoleucine 21–lysine 99 constitute a propeptide that is removed on maturation.

Post-translationally, contain 2 disulfide bonds. As to expression, expressed by the venom duct.

Its subcellular location is the secreted. Probable neurotoxin. The protein is Conotoxin Im14.2 of Conus imperialis (Imperial cone).